We begin with the raw amino-acid sequence, 252 residues long: Uracil-DNA glycosylase (252 aa).

Aspartate 78 acts as the Proton acceptor in catalysis.

This sequence belongs to the uracil-DNA glycosylase (UDG) superfamily. UNG family.

Its subcellular location is the cytoplasm. It catalyses the reaction Hydrolyzes single-stranded DNA or mismatched double-stranded DNA and polynucleotides, releasing free uracil.. In terms of biological role, excises uracil residues from the DNA which can arise as a result of misincorporation of dUMP residues by DNA polymerase or due to deamination of cytosine. In Bordetella avium (strain 197N), this protein is Uracil-DNA glycosylase.